The sequence spans 318 residues: Ribosomal RNA small subunit methyltransferase H (318 aa).

S-adenosyl-L-methionine is bound by residues 34-36 (GGH), Asp-57, Leu-91, Asp-110, and Gln-117.

Belongs to the methyltransferase superfamily. RsmH family.

It is found in the cytoplasm. The enzyme catalyses cytidine(1402) in 16S rRNA + S-adenosyl-L-methionine = N(4)-methylcytidine(1402) in 16S rRNA + S-adenosyl-L-homocysteine + H(+). Specifically methylates the N4 position of cytidine in position 1402 (C1402) of 16S rRNA. In Chlorobaculum parvum (strain DSM 263 / NCIMB 8327) (Chlorobium vibrioforme subsp. thiosulfatophilum), this protein is Ribosomal RNA small subunit methyltransferase H.